The following is a 288-amino-acid chain: Alpha/beta hydrolase domain-containing protein 17B (288 aa).

Catalysis depends on charge relay system residues Ser170, Asp235, and His264.

It belongs to the AB hydrolase superfamily. ABHD17 family. In terms of processing, palmitoylated on cysteine residues located in a cysteine cluster at the N-terminus which promotes membrane localization.

The protein localises to the cell membrane. Its subcellular location is the recycling endosome membrane. The protein resides in the cell projection. It is found in the dendritic spine. It localises to the postsynaptic density membrane. The catalysed reaction is S-hexadecanoyl-L-cysteinyl-[protein] + H2O = L-cysteinyl-[protein] + hexadecanoate + H(+). Its function is as follows. Hydrolyzes fatty acids from S-acylated cysteine residues in proteins. The sequence is that of Alpha/beta hydrolase domain-containing protein 17B from Xenopus tropicalis (Western clawed frog).